The chain runs to 404 residues: Argininosuccinate synthase (404 aa).

Residue 9–17 participates in ATP binding; sequence AYSGGLDTS. Residue Y86 coordinates L-citrulline. G116 provides a ligand contact to ATP. Residues T118, N122, and D123 each contribute to the L-aspartate site. N122 contacts L-citrulline. L-citrulline is bound by residues R126, S174, S183, E259, and Y271.

This sequence belongs to the argininosuccinate synthase family. Type 1 subfamily. As to quaternary structure, homotetramer.

Its subcellular location is the cytoplasm. The catalysed reaction is L-citrulline + L-aspartate + ATP = 2-(N(omega)-L-arginino)succinate + AMP + diphosphate + H(+). The protein operates within amino-acid biosynthesis; L-arginine biosynthesis; L-arginine from L-ornithine and carbamoyl phosphate: step 2/3. In Listeria monocytogenes serotype 4b (strain CLIP80459), this protein is Argininosuccinate synthase.